A 262-amino-acid chain; its full sequence is Type III pantothenate kinase (262 aa).

Residue Asp9–Lys16 participates in ATP binding. Residues Tyr103 and Gly110–Arg113 contribute to the substrate site. Catalysis depends on Asp112, which acts as the Proton acceptor. Residue Asp134 participates in K(+) binding. Thr137 lines the ATP pocket. Position 190 (Thr190) interacts with substrate.

This sequence belongs to the type III pantothenate kinase family. Homodimer. NH4(+) serves as cofactor. Requires K(+) as cofactor.

It is found in the cytoplasm. It carries out the reaction (R)-pantothenate + ATP = (R)-4'-phosphopantothenate + ADP + H(+). It functions in the pathway cofactor biosynthesis; coenzyme A biosynthesis; CoA from (R)-pantothenate: step 1/5. Catalyzes the phosphorylation of pantothenate (Pan), the first step in CoA biosynthesis. This chain is Type III pantothenate kinase, found in Nitratidesulfovibrio vulgaris (strain DSM 19637 / Miyazaki F) (Desulfovibrio vulgaris).